Reading from the N-terminus, the 439-residue chain is CBL-interacting protein kinase 14 (439 aa).

The region spanning 12 to 267 (YELGRLLGKG…IQKIKESTWF (256 aa)) is the Protein kinase domain. Residues 18–26 (LGKGTFGKV) and lysine 41 contribute to the ATP site. Aspartate 135 acts as the Proton acceptor in catalysis. Residues 153–182 (DFGLSALSESKRQDGLLHTTCGTPAYVAPE) form an activation loop region. The region spanning 298–333 (RKKNAHEDVKPMSVTNLNAFEIISFSKGFDLSGMFI) is the NAF domain. The segment at 338–367 (RNEARFTSDKSASTIISKLEDVAKALNLRV) is PPI.

Belongs to the protein kinase superfamily. CAMK Ser/Thr protein kinase family. SNF1 subfamily. The cofactor is Mn(2+).

The enzyme catalyses L-seryl-[protein] + ATP = O-phospho-L-seryl-[protein] + ADP + H(+). The catalysed reaction is L-threonyl-[protein] + ATP = O-phospho-L-threonyl-[protein] + ADP + H(+). Functionally, CIPK serine-threonine protein kinases interact with CBL proteins. Binding of a CBL protein to the regulatory NAF domain of CIPK protein lead to the activation of the kinase in a calcium-dependent manner. This Oryza sativa subsp. japonica (Rice) protein is CBL-interacting protein kinase 14 (CIPK14).